Consider the following 491-residue polypeptide: Probable glycine dehydrogenase (decarboxylating) subunit 2 (491 aa).

Position 273 is an N6-(pyridoxal phosphate)lysine (K273).

The protein belongs to the GcvP family. C-terminal subunit subfamily. As to quaternary structure, the glycine cleavage system is composed of four proteins: P, T, L and H. In this organism, the P 'protein' is a heterodimer of two subunits. Pyridoxal 5'-phosphate serves as cofactor.

It catalyses the reaction N(6)-[(R)-lipoyl]-L-lysyl-[glycine-cleavage complex H protein] + glycine + H(+) = N(6)-[(R)-S(8)-aminomethyldihydrolipoyl]-L-lysyl-[glycine-cleavage complex H protein] + CO2. The glycine cleavage system catalyzes the degradation of glycine. The P protein binds the alpha-amino group of glycine through its pyridoxal phosphate cofactor; CO(2) is released and the remaining methylamine moiety is then transferred to the lipoamide cofactor of the H protein. The protein is Probable glycine dehydrogenase (decarboxylating) subunit 2 of Bacillus cereus (strain B4264).